The chain runs to 65 residues: MPKQKTHRASAKRFKRTGSGGLKRFRAFTSHRFHGKTKKQRRHLRKAGLVSSGDFKRIKAMVTGL.

The segment covering 1-16 (MPKQKTHRASAKRFKR) has biased composition (basic residues). Residues 1 to 20 (MPKQKTHRASAKRFKRTGSG) are disordered.

This sequence belongs to the bacterial ribosomal protein bL35 family.

The sequence is that of Large ribosomal subunit protein bL35 from Streptococcus pyogenes serotype M1.